The following is a 380-amino-acid chain: Succinyl-diaminopimelate desuccinylase (380 aa).

H70 contributes to the Zn(2+) binding site. D72 is an active-site residue. D103 contacts Zn(2+). E137 functions as the Proton acceptor in the catalytic mechanism. Zn(2+) contacts are provided by E138, E166, and H352.

This sequence belongs to the peptidase M20A family. DapE subfamily. In terms of assembly, homodimer. Requires Zn(2+) as cofactor. Co(2+) serves as cofactor.

The enzyme catalyses N-succinyl-(2S,6S)-2,6-diaminopimelate + H2O = (2S,6S)-2,6-diaminopimelate + succinate. Its pathway is amino-acid biosynthesis; L-lysine biosynthesis via DAP pathway; LL-2,6-diaminopimelate from (S)-tetrahydrodipicolinate (succinylase route): step 3/3. Functionally, catalyzes the hydrolysis of N-succinyl-L,L-diaminopimelic acid (SDAP), forming succinate and LL-2,6-diaminopimelate (DAP), an intermediate involved in the bacterial biosynthesis of lysine and meso-diaminopimelic acid, an essential component of bacterial cell walls. In Azoarcus sp. (strain BH72), this protein is Succinyl-diaminopimelate desuccinylase.